The chain runs to 125 residues: uncharacterized protein (125 aa).

The protein belongs to the anhydro-N-acetylmuramic acid kinase family.

This is an uncharacterized protein from Yersinia enterocolitica.